The primary structure comprises 622 residues: Cilia- and flagella-associated protein 206 (622 aa).

Residues 568 to 593 (NTSQVYPLKEASTQSKREGSSRVPRP) form a disordered region.

Belongs to the CFAP206 family. Expressed in the sperm, oviduct, lung, nasal cavity, brain ependyma and choroid plexus.

The protein resides in the cytoplasm. Its subcellular location is the cytoskeleton. It is found in the cilium axoneme. The protein localises to the cilium basal body. Its function is as follows. Essential for sperm motility and is involved in the regulation of the beating frequency of motile cilia on the epithelial cells of the respiratory tract. Required for the establishment of radial spokes in sperm flagella. In Mus musculus (Mouse), this protein is Cilia- and flagella-associated protein 206.